The following is a 345-amino-acid chain: Guanine nucleotide-binding protein G(i) subunit alpha-3 (345 aa).

The G-alpha domain maps to 23-345 (KEVKLLLLGA…KSNLMECGLY (323 aa)). The tract at residues 26–39 (KLLLLGAGESGKST) is G1 motif. GTP contacts are provided by glycine 33, glutamate 34, serine 35, glycine 36, lysine 37, serine 38, threonine 39, aspartate 141, serine 142, leucine 166, arginine 167, threonine 168, arginine 169, valine 170, lysine 171, threonine 172, valine 192, glycine 194, asparagine 260, lysine 261, aspartate 263, leucine 264, cysteine 316, alanine 317, and threonine 318. Serine 38 contacts Mg(2+). The segment at 164 to 172 (DVLRTRVKT) is G2 motif. A Mg(2+)-binding site is contributed by threonine 172. Residues 187 to 196 (FKMFDVGGQR) form a G3 motif region. The G4 motif stretch occupies residues 256-263 (ILFLNKKD). The tract at residues 315 to 320 (TCATDT) is G5 motif.

It belongs to the G-alpha family. G(i/o/t/z) subfamily. In terms of assembly, heterotrimeric G proteins are composed of 3 units; alpha, beta and gamma. The alpha subunit contains the guanine nucleotide binding site. GTP binding causes dissociation of the heterotrimer, liberating the individual subunits so that they can interact with downstream effector proteins.

It localises to the cytoplasm. It is found in the cell membrane. The protein localises to the cytoskeleton. The protein resides in the microtubule organizing center. Its subcellular location is the centrosome. It localises to the membrane. Functionally, heterotrimeric guanine nucleotide-binding proteins (G proteins) function as transducers downstream of G protein-coupled receptors (GPCRs) in numerous signaling cascades. The alpha chain contains the guanine nucleotide binding site and alternates between an active, GTP-bound state and an inactive, GDP-bound state. Signaling by an activated GPCR promotes GDP release and GTP binding. The alpha subunit has a low GTPase activity that converts bound GTP to GDP, thereby terminating the signal. Both GDP release and GTP hydrolysis are modulated by numerous regulatory proteins. Signaling is mediated via effector proteins, such as adenylate cyclase. Inhibits adenylate cyclase activity, leading to decreased intracellular cAMP levels. Stimulates the activity of receptor-regulated K(+) channels. The active GTP-bound form prevents the association of RGS14 with centrosomes and is required for the translocation of RGS14 from the cytoplasm to the plasma membrane. May play a role in cell division. The active GTP-bound form activates the calcium permeant TRPC5 ion channels. The polypeptide is Guanine nucleotide-binding protein G(i) subunit alpha-3 (gnai3) (Xenopus laevis (African clawed frog)).